The primary structure comprises 134 residues: Putative transposase InsN for insertion sequence element IS911A (134 aa).

It belongs to the transposase 8 family.

Involved in the transposition of the insertion sequence IS911. The polypeptide is Putative transposase InsN for insertion sequence element IS911A (insN1) (Escherichia coli (strain K12)).